The chain runs to 311 residues: Ribosomal RNA small subunit methyltransferase H (311 aa).

Residues 34 to 36, Asp54, Phe80, Asp104, and Gln111 each bind S-adenosyl-L-methionine; that span reads GGH.

Belongs to the methyltransferase superfamily. RsmH family.

It localises to the cytoplasm. It catalyses the reaction cytidine(1402) in 16S rRNA + S-adenosyl-L-methionine = N(4)-methylcytidine(1402) in 16S rRNA + S-adenosyl-L-homocysteine + H(+). Functionally, specifically methylates the N4 position of cytidine in position 1402 (C1402) of 16S rRNA. In Teredinibacter turnerae (strain ATCC 39867 / T7901), this protein is Ribosomal RNA small subunit methyltransferase H.